The sequence spans 938 residues: Isoleucine--tRNA ligase (938 aa).

The 'HIGH' region signature appears at 58-68 (PYANGNIHIGH). E562 is a binding site for L-isoleucyl-5'-AMP. The short motif at 603–607 (KMSKS) is the 'KMSKS' region element. An ATP-binding site is contributed by K606. Positions 901, 904, 921, and 924 each coordinate Zn(2+).

This sequence belongs to the class-I aminoacyl-tRNA synthetase family. IleS type 1 subfamily. In terms of assembly, monomer. Requires Zn(2+) as cofactor.

Its subcellular location is the cytoplasm. It catalyses the reaction tRNA(Ile) + L-isoleucine + ATP = L-isoleucyl-tRNA(Ile) + AMP + diphosphate. Functionally, catalyzes the attachment of isoleucine to tRNA(Ile). As IleRS can inadvertently accommodate and process structurally similar amino acids such as valine, to avoid such errors it has two additional distinct tRNA(Ile)-dependent editing activities. One activity is designated as 'pretransfer' editing and involves the hydrolysis of activated Val-AMP. The other activity is designated 'posttransfer' editing and involves deacylation of mischarged Val-tRNA(Ile). This is Isoleucine--tRNA ligase from Actinobacillus pleuropneumoniae serotype 7 (strain AP76).